The sequence spans 823 residues: Putative ankyrin repeat domain-containing protein 20A4 (823 aa).

5 ANK repeats span residues 66-95 (QHRT…QIDV), 99-128 (ENRT…NPNL), 132-161 (YGNT…HIEA), 165-194 (DNNT…SSHA), and 198-227 (LRRS…DVFA). Disordered regions lie at residues 301–343 (VPEK…EVED) and 356–405 (QTLR…NICD). The segment covering 371 to 384 (EQQRHERSEKKQPQ) has biased composition (basic and acidic residues). Coiled coils occupy residues 431-480 (KKLK…KQLE), 565-724 (EMIT…NNST), and 776-806 (FVLE…KTEV).

In Homo sapiens (Human), this protein is Putative ankyrin repeat domain-containing protein 20A4.